Consider the following 547-residue polypeptide: Chaperonin GroEL (547 aa).

ATP contacts are provided by residues 30-33 (TLGP), Lys51, 87-91 (DGTTT), Gly415, 479-481 (NAA), and Asp495.

The protein belongs to the chaperonin (HSP60) family. In terms of assembly, forms a cylinder of 14 subunits composed of two heptameric rings stacked back-to-back. Interacts with the co-chaperonin GroES.

It localises to the cytoplasm. It carries out the reaction ATP + H2O + a folded polypeptide = ADP + phosphate + an unfolded polypeptide.. Its function is as follows. Together with its co-chaperonin GroES, plays an essential role in assisting protein folding. The GroEL-GroES system forms a nano-cage that allows encapsulation of the non-native substrate proteins and provides a physical environment optimized to promote and accelerate protein folding. The polypeptide is Chaperonin GroEL (Pseudomonas putida (strain GB-1)).